The primary structure comprises 357 residues: GDP-mannose transporter 2 (357 aa).

The Cytoplasmic segment spans residues 1–33 (MASARNGVSKDELLPVYERRSQRDGDISGSVKS). Residues 34–54 (FASTIGNSASAAVLAYCLSSI) traverse the membrane as a helical segment. Over 55 to 68 (SMTLVNKYVVSGAS) the chain is Lumenal. Residues 69-89 (WNLSFLYLAMQSFIGTVAILA) form a helical membrane-spanning segment. Residues 90-107 (CKKTGLIQNLALFDLKKA) are Cytoplasmic-facing. The chain crosses the membrane as a helical span at residues 108–128 (QTWLPISLLLVGMIYTGNKAL). Gln-129 is a topological domain (lumenal). A helical transmembrane segment spans residues 130–150 (FLSVPVYTIFKNLTIIVIAYG). Residues 151 to 161 (EVLMVGGGVKP) are Cytoplasmic-facing. The chain crosses the membrane as a helical span at residues 162–181 (LALLSFGLMVLSSVVAAWAD). Residues 182 to 196 (IQNATTATVGASSDS) lie on the Lumenal side of the membrane. An N-linked (GlcNAc...) asparagine glycan is attached at Asn-184. A helical membrane pass occupies residues 197-217 (TAAALSALNAGYAWMGTNVIF). Residues 218–236 (SASYALGMRRVIKKTNFDN) are Cytoplasmic-facing. The chain crosses the membrane as a helical span at residues 237 to 257 (WDVMFYNNLLSIPILLLASVL). The Lumenal segment spans residues 258–277 (AEDWSSENLQRNFPAELRQS). A helical membrane pass occupies residues 278 to 298 (LFIGILYSGVAAVFISYCTAW). Topologically, residues 299–306 (CVRATSST) are cytoplasmic. Residues 307 to 327 (TYAMVGALNKLPLAVAGIVFF) traverse the membrane as a helical segment. Residues 328 to 332 (AAPVT) lie on the Lumenal side of the membrane. Residues 333–352 (FGSVSAIVLGFISGLVYARA) traverse the membrane as a helical segment. Over 353–357 (KSTGA) the chain is Cytoplasmic.

This sequence belongs to the TPT transporter family. SLC35D subfamily. Homooligomer.

It localises to the golgi apparatus membrane. The protein localises to the cytoplasmic vesicle membrane. It is found in the endoplasmic reticulum membrane. Its function is as follows. Involved in the import of GDP-mannose from the cytoplasm into the Golgi lumen. The protein is GDP-mannose transporter 2 (gmt2) of Neosartorya fischeri (strain ATCC 1020 / DSM 3700 / CBS 544.65 / FGSC A1164 / JCM 1740 / NRRL 181 / WB 181) (Aspergillus fischerianus).